We begin with the raw amino-acid sequence, 65 residues long: Large ribosomal subunit protein bL33m (65 aa).

Belongs to the bacterial ribosomal protein bL33 family. In terms of assembly, component of the mitochondrial ribosome large subunit (39S) which comprises a 16S rRNA and about 50 distinct proteins.

It is found in the mitochondrion. The sequence is that of Large ribosomal subunit protein bL33m (mRpL33) from Anopheles gambiae (African malaria mosquito).